Here is an 827-residue protein sequence, read N- to C-terminus: Spastin (827 aa).

Residues 1-13 (MVRNKYTLTTAGK) show a composition bias toward polar residues. Positions 1–58 (MVRNKYTLTTAGKSPSKKSRTGSLSKQHDATGDDDGETGTLDGSGSAAGSPVGGGTDA) are disordered. The Cytoplasmic segment spans residues 1–79 (MVRNKYTLTT…KQNLYIISFP (79 aa)). The span at 38–50 (TGTLDGSGSAAGS) shows a compositional bias: low complexity. Positions 80–100 (VIFVFNVLRSLLYQLFIVFRY) form an intramembrane region, helical. The Cytoplasmic portion of the chain corresponds to 101–827 (VYNFTTKVVY…WLQDFGDVTL (727 aa)). 2 disordered regions span residues 127–190 (QHGH…AHPL) and 207–229 (SIQR…KQKH). Over residues 129–141 (GHHHHHHHRHSSH) the composition is skewed to basic residues. Positions 142 to 190 (SIHSTAAAHQLQQHQQQQQHQYSLLQQEQHGVTEPQQQQQQQHQAAHPL) are enriched in low complexity. An MIT domain is found at 231–306 (HRRAFEYISK…SMARDRLQFL (76 aa)). Disordered stretches follow at residues 358–381 (HHPA…ATPS), 398–433 (VGYK…GGAG), and 476–526 (VSIP…PQIS). Residues 364–381 (TAASSRPTTAATAPATPS) are compositionally biased toward low complexity. Low complexity-rich tracts occupy residues 476–486 (VSIPIPGSSPV) and 510–524 (QQPQ…QQPQ). 592-599 (GPPGNGKT) lines the ATP pocket.

It belongs to the AAA ATPase family. Spastin subfamily. Homohexamer. The homohexamer is stabilized by ATP-binding. The homohexamer may adopt a ring conformation through which microtubules pass prior to being severed. Interacts with microtubules.

The protein resides in the membrane. The protein localises to the cytoplasm. It is found in the cytoskeleton. Its subcellular location is the microtubule organizing center. It localises to the centrosome. It carries out the reaction n ATP + n H2O + a microtubule = n ADP + n phosphate + (n+1) alpha/beta tubulin heterodimers.. ATP-dependent microtubule severing protein. Microtubule severing may promote reorganization of cellular microtubule arrays and the release of microtubules from the microtubule organizing center following nucleation. The polypeptide is Spastin (spas) (Anopheles gambiae (African malaria mosquito)).